We begin with the raw amino-acid sequence, 625 residues long: DNA mismatch repair protein MutL (625 aa).

The protein belongs to the DNA mismatch repair MutL/HexB family.

In terms of biological role, this protein is involved in the repair of mismatches in DNA. It is required for dam-dependent methyl-directed DNA mismatch repair. May act as a 'molecular matchmaker', a protein that promotes the formation of a stable complex between two or more DNA-binding proteins in an ATP-dependent manner without itself being part of a final effector complex. This chain is DNA mismatch repair protein MutL, found in Bacteroides fragilis (strain YCH46).